Consider the following 296-residue polypeptide: Maltose/maltodextrin transport system permease protein MalG (296 aa).

The Cytoplasmic segment spans residues 1–12; it reads MAMVQPKSQKWR. Residues 13–35 form a helical membrane-spanning segment; the sequence is LLATHLLMFTFIAMILFPLLMVI. At 36–88 the chain is on the periplasmic side; that stretch reads TISLRPGNFATGSLIPENISWEHWKLALGYSVVSPDGRVTPPPFPVMLWLWNS. The 197-residue stretch at 85–281 folds into the ABC transmembrane type-1 domain; the sequence is LWNSVKVAFI…LPITIVFLVA (197 aa). A helical membrane pass occupies residues 89-111; it reads VKVAFITAVGIVTLSTTCAYAFA. Residues 112–123 lie on the Cytoplasmic side of the membrane; the sequence is RMHFRGKSTLLK. The chain crosses the membrane as a helical span at residues 124 to 143; sequence GMLIFQMFPAVLSLVALYAL. The Periplasmic segment spans residues 144 to 152; it reads FDRLGEYVP. The chain crosses the membrane as a helical span at residues 153–175; sequence FIGLNTHGGVIFAYLGGIALHVW. Over 176–205 the chain is Cytoplasmic; sequence TIKGYFETIDGSLEEAAALDGATPWQAFRM. The chain crosses the membrane as a helical span at residues 206-228; that stretch reads VLLPLSVPILAVVFILSFIGVIT. Topologically, residues 229–257 are periplasmic; the sequence is EVPVASLLLRDVNNYTLAVGMQQYLNPQN. A helical membrane pass occupies residues 258–280; sequence YLWGDFAAAAVLSALPITIVFLV. Topologically, residues 281-296 are cytoplasmic; sequence AQRWLVSGLTAGGVKG.

It belongs to the binding-protein-dependent transport system permease family. MalFG subfamily. In terms of assembly, the complex is composed of two ATP-binding proteins (MalK), two transmembrane proteins (MalG and MalF) and a solute-binding protein (MalE).

The protein resides in the cell inner membrane. Functionally, part of the ABC transporter complex MalEFGK involved in maltose/maltodextrin import. Probably responsible for the translocation of the substrate across the membrane. The protein is Maltose/maltodextrin transport system permease protein MalG (malG) of Photorhabdus laumondii subsp. laumondii (strain DSM 15139 / CIP 105565 / TT01) (Photorhabdus luminescens subsp. laumondii).